A 492-amino-acid polypeptide reads, in one-letter code: 2,3-bisphosphoglycerate-independent phosphoglycerate mutase (492 aa).

Mn(2+) contacts are provided by Asp11 and Ser61. Catalysis depends on Ser61, which acts as the Phosphoserine intermediate. Substrate is bound by residues His118, 147–148 (RD), Arg177, Arg183, 248–251 (RNDR), and Lys321. Mn(2+) contacts are provided by Asp387, His391, Asp428, His429, and His446.

Belongs to the BPG-independent phosphoglycerate mutase family. Monomer. The cofactor is Mn(2+).

The enzyme catalyses (2R)-2-phosphoglycerate = (2R)-3-phosphoglycerate. Its pathway is carbohydrate degradation; glycolysis; pyruvate from D-glyceraldehyde 3-phosphate: step 3/5. Functionally, catalyzes the interconversion of 2-phosphoglycerate and 3-phosphoglycerate. In Helicobacter acinonychis (strain Sheeba), this protein is 2,3-bisphosphoglycerate-independent phosphoglycerate mutase.